The following is a 906-amino-acid chain: Protein translocase subunit SecA (906 aa).

Residues glutamine 86, 104 to 108 (GEGKT), and aspartate 499 each bind ATP. A disordered region spans residues 862 to 886 (KPVVSRIDPKDRNPDDPTSWGRVSR). Residues cysteine 890, cysteine 892, cysteine 901, and histidine 902 each coordinate Zn(2+).

Belongs to the SecA family. As to quaternary structure, monomer and homodimer. Part of the essential Sec protein translocation apparatus which comprises SecA, SecYEG and auxiliary proteins SecDF-YajC and YidC. The cofactor is Zn(2+).

It is found in the cell inner membrane. It localises to the cytoplasm. It catalyses the reaction ATP + H2O + cellular proteinSide 1 = ADP + phosphate + cellular proteinSide 2.. Its function is as follows. Part of the Sec protein translocase complex. Interacts with the SecYEG preprotein conducting channel. Has a central role in coupling the hydrolysis of ATP to the transfer of proteins into and across the cell membrane, serving both as a receptor for the preprotein-SecB complex and as an ATP-driven molecular motor driving the stepwise translocation of polypeptide chains across the membrane. In Rickettsia africae (strain ESF-5), this protein is Protein translocase subunit SecA.